The primary structure comprises 204 residues: Guanylate kinase (204 aa).

The 179-residue stretch at 4 to 182 (GMLVVVSGPS…AVNDLEAVLT (179 aa)) folds into the Guanylate kinase-like domain. An ATP-binding site is contributed by 11 to 18 (GPSGAGKG).

This sequence belongs to the guanylate kinase family.

The protein resides in the cytoplasm. The catalysed reaction is GMP + ATP = GDP + ADP. Its function is as follows. Essential for recycling GMP and indirectly, cGMP. This chain is Guanylate kinase, found in Carboxydothermus hydrogenoformans (strain ATCC BAA-161 / DSM 6008 / Z-2901).